The following is a 407-amino-acid chain: MDTLLERFLRYVTFHTRSDATNPACPSSEGQLIFARALRDEMEQMGLTLVTLDEHGYLTACLPGNQPDAPAIGLIAHMDTADYAAEQVVPQIIESYQGGDICLGKGDEVLAIRQYRCLKNYLGQDLITTDGSTLLGADDKAGIAEILTAIDYLLAHPDIPRGDLWVGLTPDEEIGRGADLFPLDRFPAKWAYTVDGGELGELEYENFNAASATVRITGNNVHPGTAKGSMINSQTLAARFHAAMPPEQTPECTDGYEGFFHLAQMSGTVEESTLHYIIRDFDDDAFAARKAQLKERVASLQLDAPKARIELTLTDSYRNMRSQIEPHMHIVELARAAMLAADVVPKIKPIRGGTDGARLSFMGLPCPNLFTGGHNFHGKHEFIPLQSMEKAVATLVALVRLTSAWRG.

H77 is a Zn(2+) binding site. The active site involves D79. D138 contacts Zn(2+). The active-site Proton acceptor is the E172. The Zn(2+) site is built by E173, D195, and H377.

Belongs to the peptidase M20B family. It depends on Zn(2+) as a cofactor.

Its subcellular location is the cytoplasm. The enzyme catalyses Release of the N-terminal residue from a tripeptide.. Cleaves the N-terminal amino acid of tripeptides. In Aeromonas salmonicida (strain A449), this protein is Peptidase T.